A 436-amino-acid polypeptide reads, in one-letter code: 2-(3-amino-3-carboxypropyl)histidine synthase subunit 1 (436 aa).

The tract at residues M1 to S27 is disordered. Residues S7–R19 are compositionally biased toward basic residues. [4Fe-4S] cluster contacts are provided by C130, C239, and C368. Residues P417–S436 form a disordered region. Positions P426–S436 are enriched in basic residues.

This sequence belongs to the DPH1/DPH2 family. DPH1 subfamily. In terms of assembly, component of the 2-(3-amino-3-carboxypropyl)histidine synthase complex composed of dph1, dph2, dph3 and a NADH-dependent reductase, predominantly cbr1. The cofactor is [4Fe-4S] cluster.

It localises to the cytoplasm. It carries out the reaction L-histidyl-[translation elongation factor 2] + S-adenosyl-L-methionine = 2-[(3S)-amino-3-carboxypropyl]-L-histidyl-[translation elongation factor 2] + S-methyl-5'-thioadenosine + H(+). It functions in the pathway protein modification; peptidyl-diphthamide biosynthesis. Functionally, catalyzes the first step of diphthamide biosynthesis, a post-translational modification of histidine which occurs in elongation factor 2. Dph1 and dph2 transfer a 3-amino-3-carboxypropyl (ACP) group from S-adenosyl-L-methionine (SAM) to a histidine residue, the reaction is assisted by a reduction system comprising dph3 and a NADH-dependent reductase, predominantly cbr1. This is 2-(3-amino-3-carboxypropyl)histidine synthase subunit 1 (dph1) from Schizosaccharomyces pombe (strain 972 / ATCC 24843) (Fission yeast).